The sequence spans 352 residues: V-type ATP synthase subunit C (352 aa).

The protein belongs to the V-ATPase V0D/AC39 subunit family.

Produces ATP from ADP in the presence of a proton gradient across the membrane. This chain is V-type ATP synthase subunit C (atpC), found in Deinococcus radiodurans (strain ATCC 13939 / DSM 20539 / JCM 16871 / CCUG 27074 / LMG 4051 / NBRC 15346 / NCIMB 9279 / VKM B-1422 / R1).